A 228-amino-acid polypeptide reads, in one-letter code: Cytidylate kinase (228 aa).

17-25 (GPTASGKGT) contributes to the ATP binding site.

Belongs to the cytidylate kinase family. Type 1 subfamily.

The protein localises to the cytoplasm. The catalysed reaction is CMP + ATP = CDP + ADP. It catalyses the reaction dCMP + ATP = dCDP + ADP. This is Cytidylate kinase from Burkholderia thailandensis (strain ATCC 700388 / DSM 13276 / CCUG 48851 / CIP 106301 / E264).